A 248-amino-acid chain; its full sequence is tRNA (guanine-N(1)-)-methyltransferase (248 aa).

S-adenosyl-L-methionine is bound by residues Gly113 and 133–138 (IGDYVL). A disordered region spans residues 226-248 (ARPAQTIRAKGESQKTPKNKTDG). A compositionally biased stretch (basic and acidic residues) spans 234-248 (AKGESQKTPKNKTDG).

This sequence belongs to the RNA methyltransferase TrmD family. In terms of assembly, homodimer.

It is found in the cytoplasm. The enzyme catalyses guanosine(37) in tRNA + S-adenosyl-L-methionine = N(1)-methylguanosine(37) in tRNA + S-adenosyl-L-homocysteine + H(+). In terms of biological role, specifically methylates guanosine-37 in various tRNAs. The chain is tRNA (guanine-N(1)-)-methyltransferase from Rhodopseudomonas palustris (strain ATCC BAA-98 / CGA009).